A 431-amino-acid chain; its full sequence is UDP-N-acetylglucosamine 1-carboxyvinyltransferase (431 aa).

22–23 (KN) lines the phosphoenolpyruvate pocket. Arginine 93 is a UDP-N-acetyl-alpha-D-glucosamine binding site. Cysteine 117 acts as the Proton donor in catalysis. Cysteine 117 carries the post-translational modification 2-(S-cysteinyl)pyruvic acid O-phosphothioketal. Positions 307 and 329 each coordinate UDP-N-acetyl-alpha-D-glucosamine.

It belongs to the EPSP synthase family. MurA subfamily.

Its subcellular location is the cytoplasm. It catalyses the reaction phosphoenolpyruvate + UDP-N-acetyl-alpha-D-glucosamine = UDP-N-acetyl-3-O-(1-carboxyvinyl)-alpha-D-glucosamine + phosphate. The protein operates within cell wall biogenesis; peptidoglycan biosynthesis. Its function is as follows. Cell wall formation. Adds enolpyruvyl to UDP-N-acetylglucosamine. This is UDP-N-acetylglucosamine 1-carboxyvinyltransferase from Nitrosococcus oceani (strain ATCC 19707 / BCRC 17464 / JCM 30415 / NCIMB 11848 / C-107).